The sequence spans 224 residues: Menaquinol:cytochrome c reductase cytochrome b subunit (224 aa).

Residues 37-57 (FSAFVYCFGGLTFFVTVIQIL) form a helical membrane-spanning segment. Y42 is a binding site for heme b. Heme c is bound at residue C43. Residues R91, H94, H108, and R111 each contribute to the heme b site. 3 consecutive transmembrane segments (helical) span residues 96 to 116 (WGASLVIVMMFLHTLRVFFQG), 126 to 146 (WIVGVLIFMVMMGLGFTGYLL), and 195 to 215 (IHVFFLPAALLGLMAAHFLMI). The heme b site is built by H196 and H211. 2 residues coordinate heme c: R216 and I220. Residue S221 participates in heme b binding.

The protein belongs to the cytochrome b family. As to quaternary structure, the main subunits of the menaquinol:cytochrome c complex are a Rieske-type iron-sulfur protein (QcrA), a cytochrome b (QcrB) and a cytochrome c (QcrC). It depends on heme b as a cofactor. Heme c is required as a cofactor.

It is found in the cell membrane. In terms of biological role, component of the menaquinol:cytochrome c reductase complex. The protein is Menaquinol:cytochrome c reductase cytochrome b subunit (qcrB) of Geobacillus thermodenitrificans.